The chain runs to 239 residues: DUP240 protein DFP3 (239 aa).

Residues 1-54 lie on the Cytoplasmic side of the membrane; the sequence is MQPHLDNNSNNDDVKLDTLGEQNVLSSAENITLPEDTFKSYMTYLLYEMAHYKP. The chain crosses the membrane as a helical span at residues 55–75; it reads MIFSFLALSVSILIVVIFHNV. Topologically, residues 76–79 are extracellular; it reads KACD. A helical membrane pass occupies residues 80–104; sequence VVFGFSIFVTSILFLSTLIPFNVYI. Over 105-239 the chain is Cytoplasmic; that stretch reads SDEGFRIKLL…RKQYPDADIP (135 aa).

It belongs to the DUP/COS family. As to quaternary structure, interacts according to large scale protein interaction studies with MEC3 and ULP1.

Its subcellular location is the membrane. The sequence is that of DUP240 protein DFP3 from Saccharomyces cerevisiae (strain ATCC 204508 / S288c) (Baker's yeast).